A 494-amino-acid chain; its full sequence is Calmodulin-binding protein 60 A (494 aa).

Residues 1 to 62 (MRIPTYDFGS…AGIKWICEKE (62 aa)) are calmodulin-binding. Residues 132–252 (VSDWTDEDIR…AFHRRLNLSN (121 aa)) form a DNA-binding region.

The protein belongs to the plant ACBP60 protein family. In terms of assembly, interacts with calmodulin (CaM). As to expression, expressed in stems, flowers and root.

It is found in the nucleus. In terms of biological role, transcription activator that binds DNA in a sequence-specific manner, likely 5'-GAAATTTTGG-3', to promote the expression of target genes. This is Calmodulin-binding protein 60 A from Arabidopsis thaliana (Mouse-ear cress).